A 188-amino-acid polypeptide reads, in one-letter code: Elongation factor P 1 (188 aa).

This sequence belongs to the elongation factor P family.

It is found in the cytoplasm. Its pathway is protein biosynthesis; polypeptide chain elongation. Its function is as follows. Involved in peptide bond synthesis. Stimulates efficient translation and peptide-bond synthesis on native or reconstituted 70S ribosomes in vitro. Probably functions indirectly by altering the affinity of the ribosome for aminoacyl-tRNA, thus increasing their reactivity as acceptors for peptidyl transferase. This Porphyromonas gingivalis (strain ATCC BAA-308 / W83) protein is Elongation factor P 1 (efp1).